Reading from the N-terminus, the 505-residue chain is 2,3-bisphosphoglycerate-independent phosphoglycerate mutase (505 aa).

The Mn(2+) site is built by D12 and S62. S62 (phosphoserine intermediate) is an active-site residue. Substrate contacts are provided by residues H123, 153-154, R185, R191, 257-260, and K330; these read RD and RPDR. Mn(2+) is bound by residues D397, H401, D438, H439, and H456.

It belongs to the BPG-independent phosphoglycerate mutase family. In terms of assembly, monomer. Mn(2+) serves as cofactor.

The catalysed reaction is (2R)-2-phosphoglycerate = (2R)-3-phosphoglycerate. The protein operates within carbohydrate degradation; glycolysis; pyruvate from D-glyceraldehyde 3-phosphate: step 3/5. Its function is as follows. Catalyzes the interconversion of 2-phosphoglycerate and 3-phosphoglycerate. The chain is 2,3-bisphosphoglycerate-independent phosphoglycerate mutase from Staphylococcus aureus (strain COL).